A 440-amino-acid polypeptide reads, in one-letter code: uncharacterized protein (440 aa).

This is an uncharacterized protein from Rickettsia conorii (strain ATCC VR-613 / Malish 7).